The primary structure comprises 713 residues: Cyclomaltodextrin glucanotransferase (713 aa).

The first 27 residues, Met-1–Ala-27, serve as a signal peptide directing secretion. An A1 region spans residues Ser-28 to Pro-165. Positions 54, 56, 59, 60, 78, and 80 each coordinate Ca(2+). Tyr-127–Trp-128 contacts substrate. Asn-166 is a binding site for Ca(2+). The tract at residues Asn-166 to Gln-229 is b. His-167 contributes to the substrate binding site. Ile-217 serves as a coordination point for Ca(2+). Asn-220–Asp-223 lines the substrate pocket. Asp-226 serves as a coordination point for Ca(2+). An A2 region spans residues Asn-230–Tyr-434. Arg-254 serves as a coordination point for substrate. Residue Asp-256 is the Nucleophile of the active site. Residue Lys-259–His-260 coordinates substrate. His-260 contacts Ca(2+). Glu-285 (proton donor) is an active-site residue. Substrate contacts are provided by His-355, Asp-399, and Arg-403. A c region spans residues Gly-435–Thr-522. The d stretch occupies residues Glu-523–Leu-609. The 81-residue stretch at Pro-526 to Phe-606 folds into the IPT/TIG domain. The CBM20 domain occupies Val-608–Asn-713. Residues Thr-610–Asn-713 form an e region.

This sequence belongs to the glycosyl hydrolase 13 family. As to quaternary structure, monomer. Ca(2+) is required as a cofactor.

The protein localises to the secreted. It catalyses the reaction Cyclizes part of a (1-&gt;4)-alpha-D-glucan chain by formation of a (1-&gt;4)-alpha-D-glucosidic bond.. The chain is Cyclomaltodextrin glucanotransferase from Paenibacillus macerans (Bacillus macerans).